Here is a 305-residue protein sequence, read N- to C-terminus: UDP-N-acetylenolpyruvoylglucosamine reductase (305 aa).

Residues 34–199 (RVGGPAQVLF…TSARFRGEVK (166 aa)) enclose the FAD-binding PCMH-type domain. Residue R179 is part of the active site. S228 (proton donor) is an active-site residue. Residue E298 is part of the active site.

Belongs to the MurB family. FAD is required as a cofactor.

It is found in the cytoplasm. It catalyses the reaction UDP-N-acetyl-alpha-D-muramate + NADP(+) = UDP-N-acetyl-3-O-(1-carboxyvinyl)-alpha-D-glucosamine + NADPH + H(+). It functions in the pathway cell wall biogenesis; peptidoglycan biosynthesis. Its function is as follows. Cell wall formation. In Bradyrhizobium diazoefficiens (strain JCM 10833 / BCRC 13528 / IAM 13628 / NBRC 14792 / USDA 110), this protein is UDP-N-acetylenolpyruvoylglucosamine reductase.